The following is a 1599-amino-acid chain: Protein TOPAZ1 (1599 aa).

Disordered stretches follow at residues 1-42, 159-185, 802-836, and 867-889; these read MVAQ…KESL, GCMHVPENSSKSKKENPRSLIDKTDPS, PNVAEEHQSADSKHMELPEKKEPSDHLRELPVPDP, and VTHETSSNEKPGGLSEQTKSSDL. Composition is skewed to basic and acidic residues over residues 168-183 and 805-832; these read SKSKKENPRSLIDKTD and AEEHQSADSKHMELPEKKEPSDHLRELP. The span at 874 to 884 shows a compositional bias: polar residues; that stretch reads NEKPGGLSEQT.

As to expression, expressed in both adult testis and fetal ovary, mostly in germ cells (at protein level).

The protein localises to the cytoplasm. It localises to the cytosol. Functionally, important for normal spermatogenesis and male fertility. Specifically required for progression to the post-meiotic stages of spermatocyte development. Seems to be necessary for normal expression levels of a number of testis-expressed gene transcripts, although its role in this process is unclear. This chain is Protein TOPAZ1 (TOPAZ1), found in Ovis aries (Sheep).